A 269-amino-acid polypeptide reads, in one-letter code: Hydroxyethylthiazole kinase (269 aa).

Methionine 41 contributes to the substrate binding site. ATP-binding residues include arginine 117 and serine 163. Glycine 190 lines the substrate pocket.

It belongs to the Thz kinase family. The cofactor is Mg(2+).

The catalysed reaction is 5-(2-hydroxyethyl)-4-methylthiazole + ATP = 4-methyl-5-(2-phosphooxyethyl)-thiazole + ADP + H(+). It participates in cofactor biosynthesis; thiamine diphosphate biosynthesis; 4-methyl-5-(2-phosphoethyl)-thiazole from 5-(2-hydroxyethyl)-4-methylthiazole: step 1/1. Catalyzes the phosphorylation of the hydroxyl group of 4-methyl-5-beta-hydroxyethylthiazole (THZ). The protein is Hydroxyethylthiazole kinase of Latilactobacillus sakei subsp. sakei (strain 23K) (Lactobacillus sakei subsp. sakei).